Here is a 104-residue protein sequence, read N- to C-terminus: Circadian clock oscillator protein KaiB (104 aa).

Belongs to the KaiB family. As to quaternary structure, the KaiABC complex composition changes during the circadian cycle to control KaiC phosphorylation. Complexes KaiC(6), KaiA(2-4):KaiC(6), KaiB(6):KaiC(6) and KaiC(6):KaiB(6):KaiA(12) are among the most important forms, many form cooperatively. Undergoes a major conformational rearrangment; in the free state forms homotetramers as a dimer of dimers. When bound to the CI domain of KaiC switches to a monomeric thioredoxin-fold (KaiB(fs)). KaiB(fs) binds CikA, leading it to dephosphorylate phospho-RpaA.

In terms of biological role, key component of the KaiABC oscillator complex, which constitutes the main circadian regulator in cyanobacteria. Complex composition changes during the circadian cycle to control KaiC phosphorylation. KaiA stimulates KaiC autophosphorylation, while KaiB sequesters KaiA, leading to KaiC autodephosphorylation. Phospho-Ser-431 KaiC accumulation triggers binding of KaiB to form the KaiB(6):KaiC(6) complex, leading to changes in output regulators CikA and SasA. KaiB switches to a thioredoxin-like fold (KaiB(fs)) when bound to KaiC. KaiB(6):KaiC(6) formation exposes a site for KaiA binding that sequesters KaiA from KaiC, making the KaiC(6):KaiB(6):KaiA(12) complex that results in KaiC autodephosphorylation. A metamorphic protein which reversibly switches between an inactive tetrameric fold and a rare, thioredoxin-like monomeric fold (KaiB(fs)). KaiB(fs) binds phospho-KaiC, KaiA and CikA. KaiA and CikA compete for binding to KaiB(fs), and KaiB(fs) and SasA compete for binding to KaiC, thus the clock oscillator and output signal pathway are tightly coupled. This Trichodesmium erythraeum (strain IMS101) protein is Circadian clock oscillator protein KaiB.